We begin with the raw amino-acid sequence, 406 residues long: 2,3-bisphosphoglycerate-independent phosphoglycerate mutase (406 aa).

Belongs to the BPG-independent phosphoglycerate mutase family. A-PGAM subfamily.

The enzyme catalyses (2R)-2-phosphoglycerate = (2R)-3-phosphoglycerate. Its pathway is carbohydrate degradation; glycolysis; pyruvate from D-glyceraldehyde 3-phosphate: step 3/5. Catalyzes the interconversion of 2-phosphoglycerate and 3-phosphoglycerate. This is 2,3-bisphosphoglycerate-independent phosphoglycerate mutase from Methanococcus maripaludis (strain DSM 14266 / JCM 13030 / NBRC 101832 / S2 / LL).